A 115-amino-acid polypeptide reads, in one-letter code: Con-Ins T1B (115 aa).

A signal peptide spans 1–24 (MTTSFYFLLMALGLLLYVCQSSFG). Positions 25–29 (NQHTR) are excised as a propeptide. Pro34 bears the 4-hydroxyproline; partial mark. 3 cysteine pairs are disulfide-bonded: Cys38–Cys101, Cys50–Cys114, and Cys100–Cys105. A propeptide spans 52–94 (RKRNDAGKKRGQASPLWQRGGSLSMLKARAKRNEAFHLQRAHR) (c peptide). 4-carboxyglutamate is present on Glu98. Pro104 carries the post-translational modification 4-hydroxyproline; partial. Residue Glu109 is modified to 4-carboxyglutamate; partial. Cysteine amide is present on Cys114.

This sequence belongs to the insulin family. Heterodimer of A and B chains; disulfide-linked. As to expression, expressed by the venom gland.

The protein resides in the secreted. In terms of biological role, this venom insulin, from a fish-hunting cone snail, facilitates prey capture by rapidly inducing hypoglycemic shock. It is one of the smallest known insulin found in nature and lacks the C-terminal segment of the B chain that, in human insulin, mediates engagement of the insulin receptor (INSR) and assembly of the hormone's hexameric storage form. Despite lacking this segment, it both binds and activates human insulin receptor (long isoform (HIR-B) of INSR) with a high potency (EC(50)=12.0 nM). In vivo, intraperitoneal injection of this peptide into zebrafish lowers blood glucose with a lower potency than human insulin. In addition, when applied to water, this peptide reduces overall locomotor activity of zebrafish larvae, observed as a significant decrease in the percentage of time spent swimming and movement frequency. When tested on a mouse model of diabetes, this insulin also lowers blood glucose with a 10-fold lower potency than human insulin. The chain is Con-Ins T1B from Conus tulipa (Fish-hunting cone snail).